We begin with the raw amino-acid sequence, 388 residues long: Translation initiation factor eIF2B subunit beta (388 aa).

Residues 109-133 form a disordered region; that stretch reads DDFETTTSNNNNNNNNNNINSSSNI. The segment covering 116-133 has biased composition (low complexity); sequence SNNNNNNNNNNINSSSNI.

The protein belongs to the eIF-2B alpha/beta/delta subunits family. Component of the translation initiation factor 2B (eIF2B) complex which is a heterodecamer of two sets of five different subunits: alpha, beta, gamma, delta and epsilon. Subunits alpha, beta and delta comprise a regulatory subcomplex and subunits epsilon and gamma comprise a catalytic subcomplex. Within the complex, the hexameric regulatory complex resides at the center, with the two heterodimeric catalytic subcomplexes bound on opposite sides.

The protein resides in the cytoplasm. The protein localises to the cytosol. Functionally, acts as a component of the translation initiation factor 2B (eIF2B) complex, which catalyzes the exchange of GDP for GTP on eukaryotic initiation factor 2 (eIF2) gamma subunit. Its guanine nucleotide exchange factor activity is repressed when bound to eIF2 complex phosphorylated on the alpha subunit, thereby limiting the amount of methionyl-initiator methionine tRNA available to the ribosome and consequently global translation is repressed. This Dictyostelium discoideum (Social amoeba) protein is Translation initiation factor eIF2B subunit beta (eif2b2).